The following is a 201-amino-acid chain: MKSLQTICLLFIFIARGTSDKCEICHGFGDDCDGYQEECPSPEDRCGKILIDIALAPVSFRATHKNCFSSSICKLGRVDIHVWDGVYIRGRTNCCDNDQCEDQPLPGLPLSLQNGLYCPGAFGIFTEDSTEHEVKCRGTETMCLDLVGYRQESYAGNITYNIKGCVSSCPLVTLSERGHEGRKNDLKKVECREALKPASSD.

An N-terminal signal peptide occupies residues 1–19; sequence MKSLQTICLLFIFIARGTS. Disulfide bonds link cysteine 22–cysteine 46, cysteine 25–cysteine 32, cysteine 39–cysteine 67, cysteine 73–cysteine 94, cysteine 95–cysteine 100, cysteine 118–cysteine 143, cysteine 136–cysteine 165, and cysteine 169–cysteine 191. Residue asparagine 157 is glycosylated (N-linked (GlcNAc...) asparagine).

In terms of assembly, homohexamer. In terms of processing, glycosylated. In terms of tissue distribution, expressed by the liver.

It is found in the secreted. Inhibits the enzymatic activity of phospholipase A2 (PA2). Binds to the major PLA2 toxin of D.russelli siamensis (Daboiatoxin, AC Q7T2R1, and AC Q7T3T5) at 1-2-fold molar excess of inhibitor to toxin. It exhibits broad spectra in neutralizing the toxicity of various snake venoms and toxins and inhibits the formation of edema in mice. May bind to PLA2 through its proline-rich hydrophobic core region. The polypeptide is Phospholipase A2 inhibitor PIP (Malayopython reticulatus (Reticulate python)).